The sequence spans 248 residues: Probable transcriptional regulatory protein M446_6579 (248 aa).

Belongs to the TACO1 family.

It is found in the cytoplasm. The protein is Probable transcriptional regulatory protein M446_6579 of Methylobacterium sp. (strain 4-46).